The primary structure comprises 280 residues: Lacto-N-neotetraose biosynthesis glycosyltransferase LgtE (280 aa).

The protein belongs to the glycosyltransferase 25 family.

It functions in the pathway glycan metabolism; lacto-N-neotetraose biosynthesis. Its pathway is bacterial outer membrane biogenesis; lipooligosaccharide biosynthesis. Adds the first galactose to the lacto-N-tetraose chain in lipooligosaccharide (LOS). This Neisseria meningitidis serogroup B (strain ATCC BAA-335 / MC58) protein is Lacto-N-neotetraose biosynthesis glycosyltransferase LgtE (lgtE).